The chain runs to 464 residues: uncharacterized protein (464 aa).

The TRAM domain occupies 13 to 71 (MLKVSDIIQIKIDKIVFGGEGLGYYNGFAVFVPMSIPEDELEIEIISIKKTYARGLIKN). Residues Gln295, Tyr324, Glu345, and Asp393 each contribute to the S-adenosyl-L-methionine site. Cys420 acts as the Nucleophile in catalysis.

It belongs to the class I-like SAM-binding methyltransferase superfamily. RNA M5U methyltransferase family.

This is an uncharacterized protein from Fusobacterium nucleatum subsp. nucleatum (strain ATCC 25586 / DSM 15643 / BCRC 10681 / CIP 101130 / JCM 8532 / KCTC 2640 / LMG 13131 / VPI 4355).